The primary structure comprises 411 residues: Putative acid phosphatase 10 (411 aa).

Residue His33 is the Nucleophile of the active site. Residue Asp313 is the Proton donor of the active site. Cys379 and Cys385 are oxidised to a cystine.

The protein belongs to the histidine acid phosphatase family.

It carries out the reaction a phosphate monoester + H2O = an alcohol + phosphate. This chain is Putative acid phosphatase 10 (pho-10), found in Caenorhabditis elegans.